The sequence spans 294 residues: 4-hydroxy-tetrahydrodipicolinate synthase (294 aa).

Pyruvate is bound at residue threonine 45. Residue tyrosine 133 is the Proton donor/acceptor of the active site. Lysine 161 acts as the Schiff-base intermediate with substrate in catalysis. Position 203 (isoleucine 203) interacts with pyruvate.

It belongs to the DapA family. In terms of assembly, homotetramer; dimer of dimers.

It localises to the cytoplasm. The enzyme catalyses L-aspartate 4-semialdehyde + pyruvate = (2S,4S)-4-hydroxy-2,3,4,5-tetrahydrodipicolinate + H2O + H(+). Its pathway is amino-acid biosynthesis; L-lysine biosynthesis via DAP pathway; (S)-tetrahydrodipicolinate from L-aspartate: step 3/4. Catalyzes the condensation of (S)-aspartate-beta-semialdehyde [(S)-ASA] and pyruvate to 4-hydroxy-tetrahydrodipicolinate (HTPA). This is 4-hydroxy-tetrahydrodipicolinate synthase from Shewanella baltica (strain OS223).